Reading from the N-terminus, the 102-residue chain is MFAIIETGGKQIKVEEGQEIFVEKLDVNEGDSFTFDKVLFVGGDSVKVGAPTVEGATVTATVNKQGRGKKITVFTYKRRKDSKRKKGHRQPYTKLTIDKIKA.

This sequence belongs to the bacterial ribosomal protein bL21 family. As to quaternary structure, part of the 50S ribosomal subunit. Contacts protein L20.

In terms of biological role, this protein binds to 23S rRNA in the presence of protein L20. This chain is Large ribosomal subunit protein bL21, found in Staphylococcus haemolyticus (strain JCSC1435).